Consider the following 3955-residue polypeptide: Nonribosomal peptide synthetase fmqA (3955 aa).

The tract at residues 293 to 691 is adenylation 1; it reads SYSELETLSL…AQACCTIRNV (399 aa). A Carrier 1 domain is found at 806–879; it reads THKETLIHQL…DLARLTDVVN (74 aa). The residue at position 840 (Ser-840) is an O-(pantetheine 4'-phosphoryl)serine. Positions 916 to 1187 are condensation 1; it reads QDIYPCTPLQ…IATVPLRVRL (272 aa). An adenylation 2 region spans residues 1371–1766; sequence TYAELGELSD…DEVEKHVYQC (396 aa). One can recognise a Carrier 2 domain in the interval 1880 to 1956; sequence EPTSVAEREM…KIMSHESSLS (77 aa). Position 1917 is an O-(pantetheine 4'-phosphoryl)serine (Ser-1917). The epimerase stretch occupies residues 1970–2261; sequence FALSPIQQMF…FTTMWPVVAE (292 aa). Residues 2438 to 2724 form a condensation 2 region; sequence EDIYPCSPSQ…FNPLPCRVHL (287 aa). The interval 2906-3299 is adenylation 3; it reads TYGQLDELSS…GEVEANVQHC (394 aa). A Carrier 3 domain is found at 3422–3498; it reads APSTEEEKKL…DLAKVAVPKS (77 aa). Position 3459 is an O-(pantetheine 4'-phosphoryl)serine (Ser-3459). The interval 3541 to 3805 is condensation 3; it reads PGTQAQQFFI…CLNFIPLRVM (265 aa).

The protein belongs to the NRP synthetase family. In terms of assembly, interacts with the mitogen-activated protein kinase mpkA.

Its subcellular location is the cytoplasmic vesicle. It participates in alkaloid biosynthesis. In terms of biological role, nonribosomal peptide synthetase; part of the gene cluster that mediates the biosynthesis of the antitumor fumiquinazolines that confer a dual-usage capability to defend against phagocytes in the environment and animal hosts. The simplest member is fumiquinazoline F (FQF) with a 6-6-6 tricyclic core derived from anthranilic acid (Ant), tryptophan (Trp), and alanine (Ala). The trimodular NRPS fmqA is responsible for FQF formation. Modules 1, 2 and 3 of fmqA are predicted to activate and load Ant, Trp and Ala, respectively, providing for the assembly of an Ant-Trp-Ala-S-enzyme intermediate that would undergo double cyclization for chain release and generation of the tricyclic 6-6-6 product fumiquinazoline F. The presence of an E domain predicted for module 2 of fmqA is consistent with epimerization of L-Trp to D-Trp during assembly to generate the R-stereocenter at C14 of FQF. The FAD-dependent monooxygenase fmqB and the monomodular NRPS fmqC then maturate FQF to FQA. FmqB oxidizes the 2',3'-double bond of the indole side chain of FQF, and fmqC activates L-Ala as the adenylate, installs it as the pantetheinyl thioester on its carrier protein domain, and acylates the oxidized indole for subsequent intramolecular cyclization to create the 6-5-5-imidazolindolone of FQA. The FAD-linked oxidoreductase fmqD introduces a third layer of scaffold complexity by converting FQA to the spirohemiaminal FQC, presumably by catalyzing the formation of a transient imine within the pyrazinone ring. FQC subsequently converts nonenzymatically to the known cyclic aminal FQD. This is Nonribosomal peptide synthetase fmqA from Aspergillus fumigatus (strain ATCC MYA-4609 / CBS 101355 / FGSC A1100 / Af293) (Neosartorya fumigata).